The following is a 412-amino-acid chain: MSRRKQTNPNKVHWDQVFAGLEEQARQAMMKTDFPGDLGSQRQAIQQLRDQDSSSSDSEGDEEETTQDEVSSHTSEEDGGVVKVEKELENTEQPVGGNEVVEHEVTGNLNSDPLLELCQCPLCQLDCGSREQLIAHVYQHTAAVVSAKSYMCPVCGRALSSPGSLGRHLLIHSEDQRSNCAVCGARFTSHATFNSEKLPEVLNMESLPTVHNEGPSSAEGKDIAFSPPVYPAGILLVCNNCAAYRKLLEAQTPSVRKWALRRQNEPLEVRLQRLERERTAKKSRRDNETPEEREVRRMRDREAKRLQRMQETDEQRARRLQRDREAMRLKRANETPEKRQARLIREREAKRLKRRLEKMDMMLRAQFGQDPSAMAALAAEMNFFQLPVSGVELDSQLLGKMAFEEQNSSSLH.

The disordered stretch occupies residues 26-83 (RQAMMKTDFPGDLGSQRQAIQQLRDQDSSSSDSEGDEEETTQDEVSSHTSEEDGGVVK). The segment covering 58–67 (SEGDEEETTQ) has biased composition (acidic residues). 2 consecutive C2H2-type zinc fingers follow at residues 116 to 140 (ELCQ…VYQH) and 150 to 172 (YMCP…LLIH). Positions 257–366 (KWALRRQNEP…EKMDMMLRAQ (110 aa)) form a coiled coil. The tract at residues 278–319 (RTAKKSRRDNETPEEREVRRMRDREAKRLQRMQETDEQRARR) is disordered.

The protein belongs to the krueppel C2H2-type zinc-finger protein family.

The protein resides in the nucleus. Functionally, may be involved in transcriptional regulation. In Homo sapiens (Human), this protein is Zinc finger protein 821 (ZNF821).